Reading from the N-terminus, the 227-residue chain is Translation initiation factor 6 (227 aa).

This sequence belongs to the eIF-6 family.

In terms of biological role, binds to the 50S ribosomal subunit and prevents its association with the 30S ribosomal subunit to form the 70S initiation complex. This is Translation initiation factor 6 from Pyrococcus horikoshii (strain ATCC 700860 / DSM 12428 / JCM 9974 / NBRC 100139 / OT-3).